The sequence spans 189 residues: Large ribosomal subunit protein eL20 (189 aa).

Belongs to the eukaryotic ribosomal protein eL20 family.

The protein resides in the cytoplasm. This chain is Large ribosomal subunit protein eL20 (RPL18A), found in Tetrahymena thermophila.